The following is a 195-amino-acid chain: MKVNPNEIELLISAVKPEQYPETGLSEVGLSGRSNVGKSTFINSMIGRKNMARTSQQPGKTQTLNFYNIDNQLVFVDVPGYGYAKVSKKQREAFGKMIEKYISQREELKLVIQLVDLRHNPTEDDILMYNYLKYYEIPTFVVATKEDKIAKGKVQKHLANIQQKLEMEPEDEIISYSSVKNNKQQQIWNVIEKYL.

An EngB-type G domain is found at 24–195 (GLSEVGLSGR…QIWNVIEKYL (172 aa)). GTP-binding positions include 32–39 (GRSNVGKS), 59–63 (GKTQT), 77–80 (DVPG), 144–147 (TKED), and 176–178 (YSS). Residues Ser39 and Thr61 each contribute to the Mg(2+) site.

It belongs to the TRAFAC class TrmE-Era-EngA-EngB-Septin-like GTPase superfamily. EngB GTPase family. It depends on Mg(2+) as a cofactor.

In terms of biological role, necessary for normal cell division and for the maintenance of normal septation. The sequence is that of Probable GTP-binding protein EngB from Staphylococcus saprophyticus subsp. saprophyticus (strain ATCC 15305 / DSM 20229 / NCIMB 8711 / NCTC 7292 / S-41).